A 169-amino-acid polypeptide reads, in one-letter code: uncharacterized protein (169 aa).

The 129-residue stretch at 35-163 (LIGRGTFILL…PYCPDSLQAL (129 aa)) folds into the Nudix hydrolase domain. The Nudix box motif lies at 81 to 103 (YADSAARELEEELGIRDAVLREH). Positions 88 and 92 each coordinate Mg(2+).

The protein belongs to the Nudix hydrolase family. Mg(2+) is required as a cofactor.

This is an uncharacterized protein from Pseudomonas aeruginosa (strain ATCC 15692 / DSM 22644 / CIP 104116 / JCM 14847 / LMG 12228 / 1C / PRS 101 / PAO1).